Here is a 463-residue protein sequence, read N- to C-terminus: uncharacterized protein (463 aa).

It belongs to the UbiD family.

This is an uncharacterized protein from Rhodospirillum rubrum.